The sequence spans 294 residues: Oligopeptide transport system permease protein OppC (294 aa).

Transmembrane regions (helical) follow at residues 27 to 47, 94 to 114, 127 to 147, 151 to 171, 202 to 224, and 260 to 280; these read MIST…SMFL, IAFA…VITG, FTDF…VTII, NSWS…TRLI, IWPN…NIGL, and WTWV…IFIG. One can recognise an ABC transmembrane type-1 domain in the interval 88–280; it reads ARNSFNIAFA…IVVLAIIFIG (193 aa).

The protein belongs to the binding-protein-dependent transport system permease family. OppBC subfamily. As to quaternary structure, the complex is composed of two ATP-binding proteins (OppD and OppF), two transmembrane proteins (OppB and OppC) and a solute-binding protein (OppA).

Its subcellular location is the cell membrane. In terms of biological role, part of the ABC transporter complex OppABCDF involved in the uptake of oligopeptides. Probably responsible for the translocation of the substrate across the membrane. Essential for uptake of peptides larger than three amino acids and for growth in milk. The polypeptide is Oligopeptide transport system permease protein OppC (oppC) (Lactococcus lactis subsp. lactis (strain IL1403) (Streptococcus lactis)).